We begin with the raw amino-acid sequence, 385 residues long: MNVFWFIPTHGDSRYLGTSQGARAADYDYFRQIAVAADTLGYEGVLLPTGRSCEDAWVVASSLIPATQRLKFLVAIRPGIASPGLSARMAATFDRLSGGRLLINVVTGGDAAELEGDGLFVDHDTRYEITDEFLRIWRGLLTSAHHGESVEFIGRHLKSKGGKLLYPPVQSPHPPLWFGGSSPAAHEMAGEHIDTYLTWGEPPEAVAEKIADIRARAAQHGRTIRFGIRLHVIVRETEDEAWAAADKLISKLDDDTVARAQEAFAKMDSEGQRRMAALHGGKRGSRKELEIYPNLWAGVGLVRGGAGTALVGNAEQVAARMREYAELGIETFILSGYPHLEESYRFAELVFPLLPGRQRANANGPLSGPFGEIVGNHYAPKASQS.

The protein belongs to the SsuD family.

The enzyme catalyses an alkanesulfonate + FMNH2 + O2 = an aldehyde + FMN + sulfite + H2O + 2 H(+). In terms of biological role, catalyzes the desulfonation of aliphatic sulfonates. In Paraburkholderia phymatum (strain DSM 17167 / CIP 108236 / LMG 21445 / STM815) (Burkholderia phymatum), this protein is Alkanesulfonate monooxygenase.